Reading from the N-terminus, the 130-residue chain is UPF0225 protein CE1570 (130 aa).

This sequence belongs to the UPF0225 family.

The chain is UPF0225 protein CE1570 from Corynebacterium efficiens (strain DSM 44549 / YS-314 / AJ 12310 / JCM 11189 / NBRC 100395).